The following is a 317-amino-acid chain: Ceramide reductase (317 aa).

The first 27 residues, 1-27 (MATDARGVVAITGATGFLGRHLVRALA), serve as a signal peptide directing secretion.

Belongs to the NAD(P)-dependent epimerase/dehydratase family.

The protein resides in the periplasm. It catalyses the reaction N-acyl-3-oxosphinganine + NADH + H(+) = an N-acylsphinganine + NAD(+). The protein operates within lipid metabolism; sphingolipid metabolism. Its function is as follows. Involved in de novo bacterial ceramide synthesis. Catalyzes the reduction of bacterial oxidized ceramides to bacterial dihydroceramides. The protein is Ceramide reductase of Caulobacter vibrioides (strain NA1000 / CB15N) (Caulobacter crescentus).